Consider the following 302-residue polypeptide: Ubiquinone biosynthesis protein COQ4, mitochondrial (302 aa).

Residues 1–19 (MNSSPARAVRALVQSQSRQ) constitute a mitochondrion transit peptide. Histidine 176, aspartate 177, histidine 180, and glutamate 192 together coordinate Zn(2+). Residues 268 to 282 (PPPDMRDARKRERDA) are compositionally biased toward basic and acidic residues. A disordered region spans residues 268 to 302 (PPPDMRDARKRERDARRRRKQLETEAQQGLDAASL).

It belongs to the COQ4 family. In terms of assembly, component of a multi-subunit COQ enzyme complex, composed of at least COQ3, COQ4, COQ5, COQ6, COQ7 and COQ9. It depends on Zn(2+) as a cofactor.

Its subcellular location is the mitochondrion inner membrane. It carries out the reaction a 4-hydroxy-3-methoxy-5-(all-trans-polyprenyl)benzoate + H(+) = a 2-methoxy-6-(all-trans-polyprenyl)phenol + CO2. Its pathway is cofactor biosynthesis; ubiquinone biosynthesis. Its function is as follows. Lyase that catalyzes the C1-decarboxylation of 4-hydroxy-3-methoxy-5-(all-trans-polyprenyl)benzoic acid into 2-methoxy-6-(all-trans-polyprenyl)phenol during ubiquinone biosynthesis. The protein is Ubiquinone biosynthesis protein COQ4, mitochondrial of Pyricularia oryzae (strain 70-15 / ATCC MYA-4617 / FGSC 8958) (Rice blast fungus).